A 1357-amino-acid polypeptide reads, in one-letter code: MDILETSFRLEDVLSSYYRVEKVVRVNYQQFVPRTPDDQWCIQSELLIRKKDPKALVALFSRELWCFSINDQDLPMPGLEGIGEPPNSEKKGHFTPGFSKPNLPTPYAIFLKALRRMIHINMCLRSQNRLVPFGNTCIFQRDEKASSVIHFDSHLFENGDLTVSLCTKDMGFERLLSGAFTGRQVKRALYLAPSGIRAYLPFPDISKCLVAPPKNAHLLLVTLLVSHGIDLTQAKDLKWIKLVPNINHLNGYTPTISRYAEESQTSKSVIWPMDLCFQQTPADACVNTTRATPLDIGLQDSFDLIEDFIQLKLTSAYRIPGTSVNANTATGNNPLSTGGGFTDQFQPFVKHTNSSSCNYGPASRTKLTPSKAQDLRRSAAPLSADSFGNGFMTTPNVNENMGSVIDDMVICPSSVKSQNDLWNDRKSSNDDIDSINPTSQQGDSARITSGSEEQDVEVTFDKDLFGDEDDESDLFGDSSNKSTHRKEVREITDEMFDSAEIESDPEGKITPTGTSINYSTQQQTPLKRKYLDIPLDEITLPAAPLYTDPGAPLPVETPRDRRKSVFAPLNFNPMIESNVDNKYKNGGKFSFDPNEIDEPLKFEVSTTNISSSEEDDSEFSGDDFDELQQNNLQDIRAMEVGSSLQQYDMGRPINEFLNQSDSAKEDYLLPAYQSGDVIDVDKFPSRESHLDQIWKSPEINREDTPHRIGLPIIKPQLDGSGNLDIDNQITDNCSSNYYEPTPVVGADEKIQERTLHKDKKLDQQGDSAMASVVGDYSLAIKETRESSNGLPFLLRHMPLFSIPDVFLSKNPIVKVDSKLEDFLEILCEQLVFDQGFLGNFDVDPPTYKDVKLNEKGVIRETLNSVFSEFERLRGNEIISDMFYIKQPSVCVKKHGNLIKLKSDAESFAPLLHLKPSRGMKSFRGLFLTTILTQTCVSFITELAHIYSAQELGFCELVKLTNDEHNGLIVLNNFNTDTLLLLSAQIVSYCSTNMNNVKNIPLMIFLPVAPSSLEATITMTSKFQLIKNEVKSRLPDVELLLKLIPFDLTKDPVIMIDRYYELCRGIYNLLPPRTVKFASIADNLPEQVEFRTSAGNQNQLSHYDSYIHLAYTRSIDREWLAAAWSDSKGTENMVKAWYLGNSKARFETACNELWKLTVELASRKYGRICLILTRMDSVLPDDELMHWRRLSVTTRNLHLAVVCVGASTKVSLYDEDQFYPSFKPLFKDKRYANKIQANQLDDYEVVNIDEELHGVVFSSPLQLANSQHRCAIKSGALVRFKRCAGGDTLDKFEVNLLNCPHSDSTKLLKTILHQFRDIASLNTWFCISRGKDNYIPWHVVAVKKIMRFIIHVNGIEEK.

Disordered regions lie at residues 356 to 391 and 420 to 487; these read SCNYGPASRTKLTPSKAQDLRRSAAPLSADSFGNGF and DLWN…HRKE. Over residues 435–451 the composition is skewed to polar residues; it reads INPTSQQGDSARITSGS.

This sequence belongs to the Mediator complex subunit 13 family. As to quaternary structure, component of the SRB8-11 complex, which itself associates with the Mediator complex.

The protein resides in the nucleus. In terms of biological role, component of the SRB8-11 complex. The SRB8-11 complex is a regulatory module of the Mediator complex which is itself involved in regulation of basal and activated RNA polymerase II-dependent transcription. The SRB8-11 complex may be involved in the transcriptional repression of a subset of genes regulated by Mediator. It may inhibit the association of the Mediator complex with RNA polymerase II to form the holoenzyme complex. This chain is Mediator of RNA polymerase II transcription subunit 13 (SSN2), found in Eremothecium gossypii (strain ATCC 10895 / CBS 109.51 / FGSC 9923 / NRRL Y-1056) (Yeast).